Reading from the N-terminus, the 369-residue chain is Homoserine O-succinyltransferase (369 aa).

A disordered region spans residues 1-21 (MVRIVPSARRTRAPAKLDGRS). Residues 86 to 350 (VVFVAGGISA…PFGHDAFLKE (265 aa)) enclose the AB hydrolase-1 domain. Positions 92 to 95 (GISA) are important for substrate specificity. Serine 172 functions as the Nucleophile in the catalytic mechanism. Arginine 233 serves as a coordination point for substrate. Active-site residues include aspartate 314 and histidine 344. Aspartate 345 contributes to the substrate binding site.

This sequence belongs to the AB hydrolase superfamily. MetX family. As to quaternary structure, homodimer.

Its subcellular location is the cytoplasm. The enzyme catalyses L-homoserine + succinyl-CoA = O-succinyl-L-homoserine + CoA. It participates in amino-acid biosynthesis; L-methionine biosynthesis via de novo pathway; O-succinyl-L-homoserine from L-homoserine: step 1/1. In terms of biological role, transfers a succinyl group from succinyl-CoA to L-homoserine, forming succinyl-L-homoserine. This Xanthomonas campestris pv. campestris (strain ATCC 33913 / DSM 3586 / NCPPB 528 / LMG 568 / P 25) protein is Homoserine O-succinyltransferase.